The primary structure comprises 80 residues: Exodeoxyribonuclease 7 small subunit (80 aa).

This sequence belongs to the XseB family. Heterooligomer composed of large and small subunits.

The protein localises to the cytoplasm. It carries out the reaction Exonucleolytic cleavage in either 5'- to 3'- or 3'- to 5'-direction to yield nucleoside 5'-phosphates.. In terms of biological role, bidirectionally degrades single-stranded DNA into large acid-insoluble oligonucleotides, which are then degraded further into small acid-soluble oligonucleotides. This Cronobacter sakazakii (strain ATCC BAA-894) (Enterobacter sakazakii) protein is Exodeoxyribonuclease 7 small subunit.